An 860-amino-acid chain; its full sequence is MLKTILVAIFGSQNDRDIKAIQPVIEKINALEPYIKKLTDVELKEKTVEFRERLSKGETLDDVLPEAFACVREASVRTIGLRHFDVQLIGGYILHKGKIAEMKTGEGKTLVATLAAYLNALPQTGVHIVTVNDYLAKRDKEWMGVVYEKLGLTVGNVGNETKNEERRMAYNCDITYITNNEIGFDYLRDNMVIAKDDRVLRPLNYAIIDEVDSILIDEARTPLIISGACAESTDKYYISDRIVPRLKGRIITENEEIKAKYADVDLAKGYDYLIDEKNHSAVLTEQGVQKAEKMLGVKNIYDDLQSEWVHHLTQAIKAHNLYRRDIEYVVKDGKVIIVDEFTGRLMPGRRWSDGLHQSIEVKENLKIADENQTLATITFQNFFRMYKKIAGMTGTATTESEEFWEIYKLGVIEVPTNNPMIRKDYHDVIYRTEREKDNAVVNEIESLWKKGQPVLVGTRSIEKSEKISTMLRIKGIPHQVLNAKYHELEAQIIAGAGTKSAVTIATNMAGRGTDILLGAGDAVQNEEVKKSGGLHIIGTERHESRRIDNQLRGRSGRQGDPGSSKFFLSMEDELMRLFGSDKMSVIMQKLGLKENEDIQHLWISKAVENAQKKVEGMNFDIRKRLIDFDNVMNKQREAVYKLRNEILEGQDITDTIKDMISESIEEKITAWAVGKYTEEWDWASIDVWLLRTFGIKYETGNKDEISNLSRESARSAISGKVFEAYEHRKEQLTPELMLNMQRIVLLQMIDSSWRDHLYELDQLRHDIGFRAYAQKDPKVEYQKESFALFESMMNRVRDNTIEYIFKVQIDAKLQKMAIQTTNSDFRKNDGKKINKGSNKIGRNDQCPCGSGKKFKKCCGA.

Residues Q87, 105–109, and D514 each bind ATP; that span reads GEGKT. The Zn(2+) site is built by C846, C848, C857, and C858.

It belongs to the SecA family. As to quaternary structure, monomer and homodimer. Part of the essential Sec protein translocation apparatus which comprises SecA, SecYEG and auxiliary proteins SecDF. Other proteins may also be involved. Zn(2+) is required as a cofactor.

It is found in the cell membrane. Its subcellular location is the cytoplasm. The enzyme catalyses ATP + H2O + cellular proteinSide 1 = ADP + phosphate + cellular proteinSide 2.. Part of the Sec protein translocase complex. Interacts with the SecYEG preprotein conducting channel. Has a central role in coupling the hydrolysis of ATP to the transfer of proteins into and across the cell membrane, serving as an ATP-driven molecular motor driving the stepwise translocation of polypeptide chains across the membrane. The protein is Protein translocase subunit SecA of Endomicrobium trichonymphae.